The following is a 397-amino-acid chain: Enoyl-[acyl-carrier-protein] reductase [NADH] (397 aa).

NAD(+)-binding positions include 48–53 (GASTGY), 74–75 (FE), 111–112 (DA), and 139–140 (VA). Y225 is a binding site for substrate. Y235 (proton donor) is an active-site residue. NAD(+) contacts are provided by residues K244 and 273 to 275 (VVT).

Belongs to the TER reductase family. As to quaternary structure, monomer.

It carries out the reaction a 2,3-saturated acyl-[ACP] + NAD(+) = a (2E)-enoyl-[ACP] + NADH + H(+). The protein operates within lipid metabolism; fatty acid biosynthesis. In terms of biological role, involved in the final reduction of the elongation cycle of fatty acid synthesis (FAS II). Catalyzes the reduction of a carbon-carbon double bond in an enoyl moiety that is covalently linked to an acyl carrier protein (ACP). The protein is Enoyl-[acyl-carrier-protein] reductase [NADH] of Burkholderia pseudomallei (strain 668).